A 351-amino-acid polypeptide reads, in one-letter code: Protein-glutamate methylesterase/protein-glutamine glutaminase 2 (351 aa).

Positions 5-122 (RVICVDDSAL…RDGLLDYSEL (118 aa)) constitute a Response regulatory domain. Position 56 is a 4-aspartylphosphate (Asp56). The CheB-type methylesterase domain occupies 154–341 (LNSSEKLVIL…PLPAMSERIL (188 aa)). Catalysis depends on residues Ser166, His192, and Asp289.

This sequence belongs to the CheB family. Phosphorylated by CheA. Phosphorylation of the N-terminal regulatory domain activates the methylesterase activity.

It localises to the cytoplasm. It catalyses the reaction [protein]-L-glutamate 5-O-methyl ester + H2O = L-glutamyl-[protein] + methanol + H(+). The catalysed reaction is L-glutaminyl-[protein] + H2O = L-glutamyl-[protein] + NH4(+). Involved in chemotaxis. Part of a chemotaxis signal transduction system that modulates chemotaxis in response to various stimuli. Catalyzes the demethylation of specific methylglutamate residues introduced into the chemoreceptors (methyl-accepting chemotaxis proteins or MCP) by CheR. Also mediates the irreversible deamidation of specific glutamine residues to glutamic acid. This chain is Protein-glutamate methylesterase/protein-glutamine glutaminase 2, found in Bordetella avium (strain 197N).